The chain runs to 197 residues: Putative AgrB-like protein (197 aa).

Transmembrane regions (helical) follow at residues 29-49 (FGFT…AVGL), 79-99 (SIGC…VPFA), 102-122 (YAWI…APYY), and 143-163 (ILIV…LVLG).

Belongs to the AgrB family.

The protein resides in the cell membrane. May be involved in the proteolytic processing of a quorum sensing system signal molecule precursor. The sequence is that of Putative AgrB-like protein from Halalkalibacterium halodurans (strain ATCC BAA-125 / DSM 18197 / FERM 7344 / JCM 9153 / C-125) (Bacillus halodurans).